The chain runs to 411 residues: Ribose-phosphate pyrophosphokinase 3, chloroplastic (411 aa).

A chloroplast-targeting transit peptide spans 1 to 39 (MAAISPANATTAASLSLPQFSSTSSSLSSSSSPSFLNFK). Mg(2+) contacts are provided by Asp-231 and His-233. The tract at residues 314 to 329 (GRHVVIVDDLVQSGGT) is binding of phosphoribosylpyrophosphate.

Belongs to the ribose-phosphate pyrophosphokinase family.

The protein localises to the plastid. It localises to the chloroplast. It catalyses the reaction D-ribose 5-phosphate + ATP = 5-phospho-alpha-D-ribose 1-diphosphate + AMP + H(+). In Arabidopsis thaliana (Mouse-ear cress), this protein is Ribose-phosphate pyrophosphokinase 3, chloroplastic (PRS3).